The chain runs to 204 residues: Elongation factor Ts (204 aa).

Positions 80–83 are involved in Mg(2+) ion dislocation from EF-Tu; the sequence is TDFV.

This sequence belongs to the EF-Ts family.

Its subcellular location is the cytoplasm. In terms of biological role, associates with the EF-Tu.GDP complex and induces the exchange of GDP to GTP. It remains bound to the aminoacyl-tRNA.EF-Tu.GTP complex up to the GTP hydrolysis stage on the ribosome. The sequence is that of Elongation factor Ts from Thermoanaerobacter sp. (strain X514).